Here is a 551-residue protein sequence, read N- to C-terminus: Serine/threonine-protein kinase ppk21 (551 aa).

The disordered stretch occupies residues 24–43 (EARGERNPVKPQSSNVVPGT). Residues 55-315 (YVFGDIIGDG…TQQIKQFPFF (261 aa)) enclose the Protein kinase domain. ATP-binding positions include 65 to 67 (SFS) and K84. The tract at residues 86-131 (LDKKYIVKENKVKYVNIERDSMMRLNGFPGISRLFHTFQDDLKLYY) is PIF-pocket. Residues 134–136 (ELA) and E140 each bind ATP. The active-site Proton acceptor is the D179. Residues E183 and D197 each contribute to the ATP site. S220 carries the post-translational modification Phosphoserine; by autocatalysis. Phosphoserine is present on S538.

The protein belongs to the protein kinase superfamily. AGC Ser/Thr protein kinase family. PDPK1 subfamily.

It is found in the cytoplasm. Its subcellular location is the nucleus. The protein resides in the cytoskeleton. It localises to the microtubule organizing center. The protein localises to the spindle pole body. It carries out the reaction L-seryl-[protein] + ATP = O-phospho-L-seryl-[protein] + ADP + H(+). It catalyses the reaction L-threonyl-[protein] + ATP = O-phospho-L-threonyl-[protein] + ADP + H(+). The protein is Serine/threonine-protein kinase ppk21 (ppk21) of Schizosaccharomyces pombe (strain 972 / ATCC 24843) (Fission yeast).